The chain runs to 151 residues: UPF0561 protein C2orf68 homolog (151 aa).

Residues 1–89 (MEEEGEAQGR…TLKDEPNDNG (89 aa)) form a disordered region. Composition is skewed to basic and acidic residues over residues 32-46 (LARDDYDREVKQAKE) and 70-85 (RQREKAHTTETLKDEP).

Belongs to the UPF0561 family.

The chain is UPF0561 protein C2orf68 homolog from Xenopus laevis (African clawed frog).